A 283-amino-acid polypeptide reads, in one-letter code: Pantothenate synthetase (283 aa).

Methionine 30–histidine 37 provides a ligand contact to ATP. The Proton donor role is filled by histidine 37. Glutamine 61 contributes to the (R)-pantoate binding site. Glutamine 61 contacts beta-alanine. Glycine 149 to aspartate 152 provides a ligand contact to ATP. Residue glutamine 155 participates in (R)-pantoate binding. ATP-binding positions include valine 178 and leucine 186–arginine 189.

This sequence belongs to the pantothenate synthetase family. As to quaternary structure, homodimer.

It localises to the cytoplasm. The catalysed reaction is (R)-pantoate + beta-alanine + ATP = (R)-pantothenate + AMP + diphosphate + H(+). It functions in the pathway cofactor biosynthesis; (R)-pantothenate biosynthesis; (R)-pantothenate from (R)-pantoate and beta-alanine: step 1/1. Catalyzes the condensation of pantoate with beta-alanine in an ATP-dependent reaction via a pantoyl-adenylate intermediate. In Salmonella arizonae (strain ATCC BAA-731 / CDC346-86 / RSK2980), this protein is Pantothenate synthetase.